Consider the following 151-residue polypeptide: Arginine regulator (151 aa).

This sequence belongs to the ArgR family.

It is found in the cytoplasm. The protein operates within amino-acid degradation; L-arginine degradation via ADI pathway. In terms of biological role, regulates the transcription of the arc operon, involved in arginine catabolism. The polypeptide is Arginine regulator (argR1) (Clostridium perfringens (strain 13 / Type A)).